The sequence spans 648 residues: Dystrotelin (648 aa).

The ZZ-type zinc-finger motif lies at 223–279 (QHRVHCHACKAFPITGLRYRCLKCLNVHLCQSCFLTERRSRKHKPSHSVLEYCTQPS). The Zn(2+) site is built by C228, C231, C243, C246, C252, C255, H265, and H269. Positions 367–446 (QRETAELQKD…LDTVRHLLSL (80 aa)) form a coiled coil. Over residues 455-474 (SHSNLQLEQDGSINENNWTQ) the composition is skewed to polar residues. Disordered regions lie at residues 455-509 (SHSN…DTLY) and 536-557 (QREE…EGLP). The segment covering 479-502 (KPHESSSTEHEVEERGTRQERRFE) has biased composition (basic and acidic residues). Positions 538–548 (EEEELQEEEEG) are enriched in acidic residues.

Its subcellular location is the cell membrane. The polypeptide is Dystrotelin (dytn) (Danio rerio (Zebrafish)).